The chain runs to 705 residues: Calpastatin (705 aa).

Disordered stretches follow at residues methionine 1 to alanine 211 and leucine 226 to proline 493. Basic and acidic residues-rich tracts occupy residues lysine 7–proline 17 and valine 24–valine 62. Residue lysine 10 forms a Glycyl lysine isopeptide (Lys-Gly) (interchain with G-Cter in SUMO2) linkage. The residue at position 28 (lysine 28) is an N6-acetyllysine. 2 stretches are compositionally biased toward low complexity: residues serine 63–glutamate 72 and proline 94–glutamate 103. The residue at position 65 (serine 65) is a Phosphoserine. Threonine 115 carries the post-translational modification Phosphothreonine. Positions threonine 135 to lysine 151 are enriched in acidic residues. The Inhibitory domain 1 repeat unit spans residues glutamate 149 to serine 202. The segment covering glutamate 173–glycine 194 has biased composition (basic and acidic residues). Serine 202 and serine 230 each carry phosphoserine. A compositionally biased stretch (basic and acidic residues) spans aspartate 234–leucine 248. The segment covering threonine 275–leucine 286 has biased composition (polar residues). Composition is skewed to basic and acidic residues over residues arginine 289 to glycine 317 and tyrosine 327 to serine 352. The stretch at glutamate 292–alanine 344 is one Inhibitory domain 2 repeat. 3 positions are modified to phosphoserine: serine 352, serine 354, and serine 361. Positions glutamate 355 to phenylalanine 364 are enriched in acidic residues. A compositionally biased stretch (basic and acidic residues) spans aspartate 365 to glutamate 381. Phosphoserine is present on serine 428. Positions proline 430 to glutamate 489 are enriched in basic and acidic residues. An Inhibitory domain 3 repeat occupies alanine 434–valine 487. Phosphoserine is present on residues serine 504 and serine 515. The interval valine 527 to serine 705 is disordered. Over residues glutamine 533–alanine 542 the composition is skewed to low complexity. The residue at position 563 (serine 563) is a Phosphoserine. Residues proline 571 to glutamine 624 form an Inhibitory domain 4 repeat. Residues proline 571–arginine 625 are compositionally biased toward basic and acidic residues. Residues aspartate 651–aspartate 662 are compositionally biased toward low complexity. Residues lysine 683 to serine 705 are compositionally biased toward basic and acidic residues.

The protein belongs to the protease inhibitor I27 (calpastatin) family.

In terms of biological role, specific inhibition of calpain (calcium-dependent cysteine protease). Plays a key role in postmortem tenderization of meat and have been proposed to be involved in muscle protein degradation in living tissue. This is Calpastatin (CAST) from Bos taurus (Bovine).